Reading from the N-terminus, the 373-residue chain is MAQLGPRRPLAPPGPPGTLPRPDSRAGARGTRDRVDDLGTDVDSIARIVNSVFVWRVVRADERLKIFRCLTVLTEPLCQVALPNPDPGRALFCEIFLYLTRPKALRLPPNTFFALFFFNRERRYCAIVHLRSVTHPLTPLLCTLTFARIRAATPPEETPDPTTEQLAEEPVVGELDGAYLVPAKTPPEPGACCALGPGAWWHLPSGQIYCWAMDSDLGSLCPPGSRARHLGWLLARITNHPGGCESCAPPPHIDSANALWLSSVVTESCPCVAPCLWAKMAQCTLAVQGDASLCPLLFGHPVDTVTLLQAPRRPCITDRLQEVVGGRCGADNIPPTSAGWRLCVFSSYISRLFATSCPTVARAVARASSSDPE.

The segment at 1-35 is disordered; it reads MAQLGPRRPLAPPGPPGTLPRPDSRAGARGTRDRV. Over residues 9 to 19 the composition is skewed to pro residues; the sequence is PLAPPGPPGTL. Residues 22-35 are compositionally biased toward basic and acidic residues; the sequence is PDSRAGARGTRDRV.

This sequence belongs to the herpesviridae cytoplasmic envelopment protein 2 family. Interacts with cytoplasmic envelopment protein 3 and with the capsid.

Its subcellular location is the virion tegument. The protein resides in the host cytoplasm. It is found in the host nucleus. Functionally, plays a critical role in cytoplasmic virus egress. Participates in the final step of tegumentation and envelope acquisition within the host cytoplasm by directly interacting with the capsid. Upon virion binding to target cell, a signaling cascade is triggered to disrupt the interaction with the capsid, thereby preparing capsid uncoating. In Homo sapiens (Human), this protein is Cytoplasmic envelopment protein 2 (UL16).